The primary structure comprises 103 residues: Histone H4 (103 aa).

Residues 1–14 (MSGRGKGGKGLGKG) are compositionally biased toward gly residues. The disordered stretch occupies residues 1–20 (MSGRGKGGKGLGKGGAKRHR). An N6-acetyl-N6-methyllysine; alternate modification is found at K6. N6-methyllysine; alternate is present on residues K6, K9, and K13. K13 is modified (N6-acetyl-N6-methyllysine; alternate). Residues 17-21 (KRHRK) mediate DNA binding. K92 carries the N6-glutaryllysine modification.

This sequence belongs to the histone H4 family. In terms of assembly, the nucleosome is a histone octamer containing two molecules each of H2A, H2B, H3 and H4 assembled in one H3-H4 heterotetramer and two H2A-H2B heterodimers. The octamer wraps approximately 147 bp of DNA. Post-translationally, glutarylation at Lys-92 (H4K91glu) destabilizes nucleosomes by promoting dissociation of the H2A-H2B dimers from nucleosomes.

The protein localises to the nucleus. It is found in the chromosome. In terms of biological role, core component of nucleosome. Nucleosomes wrap and compact DNA into chromatin, limiting DNA accessibility to the cellular machineries which require DNA as a template. Histones thereby play a central role in transcription regulation, DNA repair, DNA replication and chromosomal stability. DNA accessibility is regulated via a complex set of post-translational modifications of histones, also called histone code, and nucleosome remodeling. This Candida glabrata (strain ATCC 2001 / BCRC 20586 / JCM 3761 / NBRC 0622 / NRRL Y-65 / CBS 138) (Yeast) protein is Histone H4 (HHF1).